A 530-amino-acid chain; its full sequence is MEDDSLYLGGEWQFNHFSKLTSSRPDAAFAEIQRTSLPEKSPLSCETRVDLCDDLAPVARQLAPREKPPLSSRRPAAVGAGLQNMGNTCYVNASLQCLTYKPPLANYMLFREHSQTCHRHKGCMLCTMQAHITRALHIPGHVIQPSQALAAGFHRGKQEDAHEFLMFTVDAMRKACLPGHKQVDRHSKDTTLIHQIFGGYWRSQIKCLHCHGISDTFDPYLDIALDIQAAQSVQQALEQLVKPEELNGENAYHCGVCLQRAPASKTLTLHNSAKVLILVLKRFPDVTGNKIAKNVQYPECLDMQPYMSQQNTGPLVYVLYAVLVHAGWSCHNGHYSSYVKAQEGQWYKMDDAEVTASSITSVLSQQAYVLFYIQKSEWERHSESVSRGREPRALGVEDTDRRATQGELKRDHPCLQAPELDEHLVERATQESTLDHWKFLQEQNKTKPEFNVRRVEGTVPPDVLVIHQSKYKCRMKNHHPEQQSSLLNLSSTTPTDQESMNTGTLASLRGRTRRSKGKNKHSKRALLVCQ.

Positions 80–375 (AGLQNMGNTC…QAYVLFYIQK (296 aa)) constitute a USP domain. C89 functions as the Nucleophile in the catalytic mechanism. The active-site Proton acceptor is the H334. Basic and acidic residues-rich tracts occupy residues 382–392 (SESVSRGREPR) and 398–410 (DTDR…ELKR). Disordered regions lie at residues 382–410 (SESV…ELKR) and 477–530 (NHHP…LVCQ). Positions 484–495 (SSLLNLSSTTPT) are enriched in low complexity. Residues 496 to 505 (DQESMNTGTL) are compositionally biased toward polar residues. The span at 510 to 524 (GRTRRSKGKNKHSKR) shows a compositional bias: basic residues.

The protein belongs to the peptidase C19 family. USP17 subfamily.

It localises to the nucleus. It is found in the endoplasmic reticulum. The enzyme catalyses Thiol-dependent hydrolysis of ester, thioester, amide, peptide and isopeptide bonds formed by the C-terminal Gly of ubiquitin (a 76-residue protein attached to proteins as an intracellular targeting signal).. Deubiquitinating enzyme that removes conjugated ubiquitin from specific proteins to regulate different cellular processes that may include cell proliferation, progression through the cell cycle, apoptosis, cell migration, and the cellular response to viral infection. This Homo sapiens (Human) protein is Ubiquitin carboxyl-terminal hydrolase 17-like protein 10 (USP17L10).